The sequence spans 284 residues: Proteasome subunit beta 1 (284 aa).

Positions Met-1–Gly-54 are cleaved as a propeptide — removed in mature form; by autocatalysis. The active-site Nucleophile is Thr-55. Basic and acidic residues predominate over residues Arg-256–Pro-277. Residues Arg-256–Met-284 are disordered.

It belongs to the peptidase T1B family. The 20S proteasome core is composed of 14 alpha and 14 beta subunits that assemble into four stacked heptameric rings, resulting in a barrel-shaped structure. The two inner rings, each composed of seven catalytic beta subunits, are sandwiched by two outer rings, each composed of seven alpha subunits. The catalytic chamber with the active sites is on the inside of the barrel. Has a gated structure, the ends of the cylinder being occluded by the N-termini of the alpha-subunits. Is capped by the proteasome-associated ATPase, ARC.

Its subcellular location is the cytoplasm. It catalyses the reaction Cleavage of peptide bonds with very broad specificity.. The protein operates within protein degradation; proteasomal Pup-dependent pathway. With respect to regulation, the formation of the proteasomal ATPase ARC-20S proteasome complex, likely via the docking of the C-termini of ARC into the intersubunit pockets in the alpha-rings, may trigger opening of the gate for substrate entry. Interconversion between the open-gate and close-gate conformations leads to a dynamic regulation of the 20S proteasome proteolysis activity. Functionally, component of the proteasome core, a large protease complex with broad specificity involved in protein degradation. This is Proteasome subunit beta 1 from Streptomyces avermitilis (strain ATCC 31267 / DSM 46492 / JCM 5070 / NBRC 14893 / NCIMB 12804 / NRRL 8165 / MA-4680).